We begin with the raw amino-acid sequence, 31 residues long: Malate dehydrogenase, mitochondrial (31 aa).

NAD(+) is bound by residues 9–19 (GIGQPLSLLMK) and 20–31 (DDLFNINAGIVK).

Belongs to the LDH/MDH superfamily. MDH type 1 family. In terms of assembly, homodimer.

Its subcellular location is the mitochondrion matrix. It carries out the reaction (S)-malate + NAD(+) = oxaloacetate + NADH + H(+). The protein is Malate dehydrogenase, mitochondrial of Imperata cylindrica (Cogon grass).